The primary structure comprises 197 residues: 3-isopropylmalate dehydratase small subunit (197 aa).

Belongs to the LeuD family. LeuD type 1 subfamily. Heterodimer of LeuC and LeuD.

The enzyme catalyses (2R,3S)-3-isopropylmalate = (2S)-2-isopropylmalate. It participates in amino-acid biosynthesis; L-leucine biosynthesis; L-leucine from 3-methyl-2-oxobutanoate: step 2/4. Functionally, catalyzes the isomerization between 2-isopropylmalate and 3-isopropylmalate, via the formation of 2-isopropylmaleate. The protein is 3-isopropylmalate dehydratase small subunit of Mycobacterium sp. (strain KMS).